Consider the following 287-residue polypeptide: MLYLVGLGLSDETDITVKGLEVVKKASRVYLEAYTSILLVEQSVLESYYGRSITVADREMVESNSEEILRNAQNEDVAFLVVGDPFGATTHTDLVLRARELEIPVRTVPNASIMSGIGACGLQLYNFGQTVSMVFFTDTWKPASFYDRIKENRQIGLHTLVLVDIKVKEQSLENMARGRLVYEPPRYMTVGQCAQQMLEIEEERKEGVYAKDSLAIGAARVGGRTEKFVAGTLEELCSTDEELGPPLHSLVLLGRRTHELELDYVRQFAVDKEKWDKIWNAEYGKQL.

S-adenosyl-L-methionine-binding positions include Leu9, Asp84, Gly87, 112 to 113, Val163, Val221, and His248; that span reads SI.

This sequence belongs to the diphthine synthase family.

The protein localises to the cytoplasm. The catalysed reaction is 2-[(3S)-amino-3-carboxypropyl]-L-histidyl-[translation elongation factor 2] + 4 S-adenosyl-L-methionine = diphthine methyl ester-[translation elongation factor 2] + 4 S-adenosyl-L-homocysteine + 3 H(+). The protein operates within protein modification; peptidyl-diphthamide biosynthesis. Functionally, S-adenosyl-L-methionine-dependent methyltransferase that catalyzes four methylations of the modified target histidine residue in translation elongation factor 2 (EF-2), to form an intermediate called diphthine methyl ester. The four successive methylation reactions represent the second step of diphthamide biosynthesis. This chain is Diphthine methyl ester synthase (DPH5), found in Gibberella zeae (strain ATCC MYA-4620 / CBS 123657 / FGSC 9075 / NRRL 31084 / PH-1) (Wheat head blight fungus).